A 242-amino-acid chain; its full sequence is uncharacterized protein (242 aa).

The HTH gntR-type domain maps to 17–85 (QRVDERIATT…HGSGSVVRDP (69 aa)). The segment at residues 45–64 (ERDLAERLGVNRTSLRQGLA) is a DNA-binding region (H-T-H motif).

This is an uncharacterized protein from Mycobacterium tuberculosis (strain ATCC 25618 / H37Rv).